Consider the following 94-residue polypeptide: Co-chaperonin GroES (94 aa).

The protein belongs to the GroES chaperonin family. As to quaternary structure, heptamer of 7 subunits arranged in a ring. Interacts with the chaperonin GroEL.

Its subcellular location is the cytoplasm. In terms of biological role, together with the chaperonin GroEL, plays an essential role in assisting protein folding. The GroEL-GroES system forms a nano-cage that allows encapsulation of the non-native substrate proteins and provides a physical environment optimized to promote and accelerate protein folding. GroES binds to the apical surface of the GroEL ring, thereby capping the opening of the GroEL channel. This is Co-chaperonin GroES from Listeria welshimeri serovar 6b (strain ATCC 35897 / DSM 20650 / CCUG 15529 / CIP 8149 / NCTC 11857 / SLCC 5334 / V8).